A 261-amino-acid chain; its full sequence is Epidermal growth factor-binding protein type B (261 aa).

The signal sequence occupies residues 1 to 16; it reads MWFLILFLALSLGGID. The propeptide at 17 to 24 is activation peptide; the sequence is AAPPLQSR. The Peptidase S1 domain occupies 25–258; that stretch reads VVGGFNCKKN…FNSWIKDTMM (234 aa). Cystine bridges form between C31-C173, C50-C66, C152-C219, C184-C198, and C209-C234. H65 functions as the Charge relay system in the catalytic mechanism. Residue N102 is glycosylated (N-linked (GlcNAc...) asparagine). D120 acts as the Charge relay system in catalysis. S213 acts as the Charge relay system in catalysis.

This sequence belongs to the peptidase S1 family. Kallikrein subfamily.

It catalyses the reaction Hydrolyzes mouse Ren2 protein (a species of prorenin present in the submandibular gland) on the carboxy side of the arginine residue at the Lys-Arg-|- pair in the N-terminus, to yield mature renin.. In terms of biological role, cleaves REN2 at a dibasic site to yield mature renin. The polypeptide is Epidermal growth factor-binding protein type B (Egfbp2) (Mus musculus (Mouse)).